We begin with the raw amino-acid sequence, 625 residues long: Probable potassium transport system protein Kup 2 (625 aa).

The next 12 helical transmembrane spans lie at 15-35, 52-72, 98-118, 134-154, 164-184, 212-232, 246-266, 284-304, 336-356, 365-385, 394-414, and 417-437; these read LSFA…LYAF, ILSL…LVIV, GGWL…DGML, LSPN…FFLF, IGVY…ILGF, LALF…ALFA, WFAV…ALVL, FLPV…QAII, VYLP…VVIF, AYGI…GIIA, FKIL…AGNI, and LLTG…VMYT.

This sequence belongs to the HAK/KUP transporter (TC 2.A.72) family.

Its subcellular location is the cell inner membrane. The catalysed reaction is K(+)(in) + H(+)(in) = K(+)(out) + H(+)(out). Functionally, transport of potassium into the cell. Likely operates as a K(+):H(+) symporter. In Legionella pneumophila (strain Corby), this protein is Probable potassium transport system protein Kup 2.